The chain runs to 472 residues: Aspartyl/glutamyl-tRNA(Asn/Gln) amidotransferase subunit B (472 aa).

It belongs to the GatB/GatE family. GatB subfamily. As to quaternary structure, heterotrimer of A, B and C subunits.

The catalysed reaction is L-glutamyl-tRNA(Gln) + L-glutamine + ATP + H2O = L-glutaminyl-tRNA(Gln) + L-glutamate + ADP + phosphate + H(+). It catalyses the reaction L-aspartyl-tRNA(Asn) + L-glutamine + ATP + H2O = L-asparaginyl-tRNA(Asn) + L-glutamate + ADP + phosphate + 2 H(+). Functionally, allows the formation of correctly charged Asn-tRNA(Asn) or Gln-tRNA(Gln) through the transamidation of misacylated Asp-tRNA(Asn) or Glu-tRNA(Gln) in organisms which lack either or both of asparaginyl-tRNA or glutaminyl-tRNA synthetases. The reaction takes place in the presence of glutamine and ATP through an activated phospho-Asp-tRNA(Asn) or phospho-Glu-tRNA(Gln). The sequence is that of Aspartyl/glutamyl-tRNA(Asn/Gln) amidotransferase subunit B from Sulfolobus acidocaldarius (strain ATCC 33909 / DSM 639 / JCM 8929 / NBRC 15157 / NCIMB 11770).